The following is a 350-amino-acid chain: CMP-N-acetylneuraminate-beta-galactosamide-alpha-2,3-sialyltransferase 2 (350 aa).

Over 1-6 (MKCSLR) the chain is Cytoplasmic. The helical; Signal-anchor for type II membrane protein transmembrane segment at 7 to 27 (VWFLSMAFLLVFIMSLLFTYS) threads the bilayer. Over 28–350 (HHSMATLPYL…ASKIEVYRGN (323 aa)) the chain is Lumenal. 3 disulfides stabilise this stretch: Cys-70–Cys-75, Cys-72–Cys-149, and Cys-152–Cys-291. Substrate-binding residues include Gln-116, Asn-157, and Asn-180. An N-linked (GlcNAc...) asparagine glycan is attached at Asn-211. Tyr-240, Tyr-276, Gly-280, Gly-300, His-309, and His-326 together coordinate substrate.

Belongs to the glycosyltransferase 29 family. As to quaternary structure, homodimer; disulfide-linked. Homodimer formation occurs in the endoplasmic reticulum. In terms of processing, the soluble form derives from the membrane form by proteolytic processing. N-glycosylated; necessary for proper exit from endoplasmic reticulum and trafficking to the Golgi apparatus.

The protein localises to the golgi apparatus. The protein resides in the golgi stack membrane. It is found in the secreted. It carries out the reaction a beta-D-galactosyl-(1-&gt;3)-N-acetyl-alpha-D-galactosaminyl derivative + CMP-N-acetyl-beta-neuraminate = an N-acetyl-alpha-neuraminyl-(2-&gt;3)-beta-D-galactosyl-(1-&gt;3)-N-acetyl-alpha-D-galactosaminyl derivative + CMP + H(+). The catalysed reaction is a ganglioside GM1 (d18:1(4E)) + CMP-N-acetyl-beta-neuraminate = a ganglioside GD1a (d18:1(4E)) + CMP + H(+). It catalyses the reaction ganglioside GM1 (d18:1(4E)/18:0) + CMP-N-acetyl-beta-neuraminate = ganglioside GD1a (18:1(4E)/18:0) + CMP + H(+). The enzyme catalyses a ganglioside GA1 + CMP-N-acetyl-beta-neuraminate = a ganglioside GM1b + CMP + H(+). It carries out the reaction a ganglioside GA1 (d18:1(4E)) + CMP-N-acetyl-beta-neuraminate = a ganglioside GM1b (d18:1(4E)) + CMP + H(+). The catalysed reaction is a globoside GalGb4Cer + CMP-N-acetyl-beta-neuraminate = a globoside MSGG + CMP + H(+). The protein operates within protein modification; protein glycosylation. It functions in the pathway glycolipid biosynthesis. A beta-galactoside alpha2-3 sialyltransferase primarily involved in terminal sialylation of ganglio and globo series glycolipids. Catalyzes the transfer of sialic acid (N-acetyl-neuraminic acid; Neu5Ac) from the nucleotide sugar donor CMP-Neu5Ac onto acceptor Galbeta-(1-&gt;3)-GalNAc-terminated glycoconjugates through an alpha2-3 linkage. Sialylates GM1/GM1a, GA1/asialo-GM1 gangliosides to form GD1a and GM1b, respectively. Together with ST3GAL3, primarily responsible for biosynthesis of brain gangliosides that function as ligand for myelin-associated glycoprotein MAG on axons, regulating MAG expression and axonal myelin stability and regeneration. Responsible for the sialylation of the pluripotent stem cell- and cancer stem cell-associated antigen SSEA3, forming SSEA4. Sialylates with low efficiency asialofetuin, presumably onto O-glycosidically linked Galbeta-(1-&gt;3)-GalNAc-O-Ser. The protein is CMP-N-acetylneuraminate-beta-galactosamide-alpha-2,3-sialyltransferase 2 (St3gal2) of Rattus norvegicus (Rat).